The chain runs to 298 residues: Aspartate carbamoyltransferase catalytic subunit (298 aa).

Residues R50 and T51 each coordinate carbamoyl phosphate. Position 79 (K79) interacts with L-aspartate. Carbamoyl phosphate contacts are provided by R100, H128, and Q131. L-aspartate is bound by residues R160 and R221. 2 residues coordinate carbamoyl phosphate: L260 and P261.

Belongs to the aspartate/ornithine carbamoyltransferase superfamily. ATCase family. Heterooligomer of catalytic and regulatory chains.

It catalyses the reaction carbamoyl phosphate + L-aspartate = N-carbamoyl-L-aspartate + phosphate + H(+). It functions in the pathway pyrimidine metabolism; UMP biosynthesis via de novo pathway; (S)-dihydroorotate from bicarbonate: step 2/3. In terms of biological role, catalyzes the condensation of carbamoyl phosphate and aspartate to form carbamoyl aspartate and inorganic phosphate, the committed step in the de novo pyrimidine nucleotide biosynthesis pathway. This Methanoculleus marisnigri (strain ATCC 35101 / DSM 1498 / JR1) protein is Aspartate carbamoyltransferase catalytic subunit.